Consider the following 154-residue polypeptide: Transcriptional repressor NrdR (154 aa).

A zinc finger spans residues 3 to 34 (CPFCGANDTKVIDSRLVAEGEQVRRRRECLAC). One can recognise an ATP-cone domain in the interval 49–139 (PRLIKQDGSR…VYRRFQDLNE (91 aa)).

It belongs to the NrdR family. The cofactor is Zn(2+).

Its function is as follows. Negatively regulates transcription of bacterial ribonucleotide reductase nrd genes and operons by binding to NrdR-boxes. The protein is Transcriptional repressor NrdR of Pseudomonas savastanoi pv. phaseolicola (strain 1448A / Race 6) (Pseudomonas syringae pv. phaseolicola (strain 1448A / Race 6)).